Consider the following 540-residue polypeptide: Cytochrome P450 monooxygenase CYP3 (540 aa).

N2 carries an N-linked (GlcNAc...) asparagine glycan. Residues 26 to 46 (IFGLSSSTLVVLVAMIAVSTL) traverse the membrane as a helical segment. N-linked (GlcNAc...) asparagine glycosylation is found at N100, N210, and N400. Heme is bound at residue C471.

This sequence belongs to the cytochrome P450 family. Heme is required as a cofactor.

The protein localises to the membrane. It functions in the pathway secondary metabolite biosynthesis. Functionally, cytochrome P450 monooxygenase; part of the gene cluster that mediates the biosynthesis of itaconic acid and 2-hydroxyparaconate. Cis-aconitate is secreted by the mitochondrial tricarboxylate transporter MTT1. In the cytosol cis-aconitate is converted into trans-aconitate via isomerization by the aconitate-delta-isomerase ADI1. Decarboxylation of trans-aconitate by the trans-aconitate decarboxylase TAD1 then leads then to the production of itaconic acid. The cytochrome P450 monooxygenase CYP3 further converts itaconate to 2-hydroxyparaconate via oxidation of the double bond, leading to a transient epoxide, which can subsequently be lactonized to produce 2-hydroxyparaconate. Secretion of itaconate and possibly 2-hydroxyparaconate into the medium is mediated by the major facilitator ITP1. The glyoxalase domain-containing protein RDO1 is not involved in the biosynthesis of itaconate and 2-hydroxyparaconate, however, it might play a role in the further conversion of 2-hydroxyparaconate to itatartarate. This is Cytochrome P450 monooxygenase CYP3 from Mycosarcoma maydis (Corn smut fungus).